The sequence spans 138 residues: Large ribosomal subunit protein uL16 (138 aa).

Over residues Met-1–Gln-13 the composition is skewed to basic residues. Positions Met-1–Thr-22 are disordered.

Belongs to the universal ribosomal protein uL16 family. Part of the 50S ribosomal subunit.

Functionally, binds 23S rRNA and is also seen to make contacts with the A and possibly P site tRNAs. This chain is Large ribosomal subunit protein uL16, found in Polaromonas naphthalenivorans (strain CJ2).